Here is a 790-residue protein sequence, read N- to C-terminus: Centrosomal protein of 78 kDa (790 aa).

5 disordered regions span residues Tyr325 to Lys345, Gly362 to Asn385, Val428 to Glu462, Ala654 to Pro732, and Lys756 to Thr790. 2 positions are modified to phosphoserine: Ser330 and Ser332. A compositionally biased stretch (low complexity) spans Val428–Ser438. Residues Gln455 to Leu510 are a coiled coil. Composition is skewed to basic and acidic residues over residues Pro693–Leu708 and Gly721–Pro732.

The protein belongs to the CEP78 family. In terms of assembly, interacts with PLK4. Interacts with FAM161A. Interacts with IFT20; regulating IFT20 stability and localization. Interacts with TTC21A; regulating TTC21A stability and localization. Interacts with USP16; promoting USP16-dependent deubiquitination of tektins. Interacts with DCAF1/VPRBP; promoting localization of the EDVP complex to centrosomes. Interacts with CEP350; promoting CEP78 localization to centrosome and centriole. Expressed by photoreceptor cells in the retina.

The protein localises to the cytoplasm. Its subcellular location is the cytoskeleton. It is found in the microtubule organizing center. The protein resides in the centrosome. It localises to the centriole. The protein localises to the cilium basal body. In terms of biological role, centriole wall protein that localizes to mature centrioles and regulates centriole and cilia biogenesis. Involved in centrosome duplication: required for efficient PLK4 centrosomal localization and PLK4-induced overduplication of centrioles. Involved in cilium biogenesis and controls cilium length. Acts as a regulator of protein stability by preventing ubiquitination of centrosomal proteins, such as CCP110 and tektins. Associates with the EDVP complex, preventing ubiquitination and degradation of CCP110. Promotes deubiquitination of tektin proteins (TEKT1, TEKT2, TEK3, TEKT4 and TEKT5) via its interaction with USP16. The sequence is that of Centrosomal protein of 78 kDa from Mus musculus (Mouse).